The primary structure comprises 541 residues: MWDSSMFLSTLTPKFYVALTGTSSLISGLILIFEWWYFRKYGTSFIEQVSINHISPWINGNDAQSDSSNGSGSSTSSGSSSSSNGGGGGGGGGAGGGGPGAGGGTNSTTTTGTQMPECKVWRNPLNLFRGAEYQRFFWATSKEPLTYYDMNLSAQDHQTFFTCEGDARKEEYEIMQTAWRERNPMQRIKSAHNALEINAECAPAYILLAEEEAMTIMEAEKILKTALKVAEINYRKSQATQHQGAIADGMHRRDTNVLIYIKRRLAMCARKLGKLKEAAKMFRDLTKEIPSIMSVLNIHENLIETLLEMQAYADCHAILAKYDDISLPKSATICYTAALLKARAVADKFSPDIASKRGLSPAEMSAVEAIHRAVEFNPHVPKYLLETKPLILPPEHILKRGDSEALAYAFFHLKHWKQVEGALNLLHCTWEGTFRMLPYPLERGHLFYPYPTCTECADRELLPAFHEVSVYPKKELPFFILFTAGLCSFTALLALLTHQYPEPMGLLAQTVLTWISYPFQLLKERVEAFWPCNLLQQLSRV.

The chain crosses the membrane as a helical span at residues 15–35 (FYVALTGTSSLISGLILIFEW). Residues 62–116 (DAQSDSSNGSGSSTSSGSSSSSNGGGGGGGGGAGGGGPGAGGGTNSTTTTGTQMP) form a disordered region. A compositionally biased stretch (low complexity) spans 67–83 (SSNGSGSSTSSGSSSSS). A compositionally biased stretch (gly residues) spans 84–105 (NGGGGGGGGGAGGGGPGAGGGT). The helical transmembrane segment at 476–496 (LPFFILFTAGLCSFTALLALL) threads the bilayer.

The protein belongs to the ST7 family.

The protein localises to the membrane. The chain is Protein ST7 homolog from Drosophila pseudoobscura pseudoobscura (Fruit fly).